An 83-amino-acid chain; its full sequence is Mu-theraphotoxin-Hhn2e (83 aa).

Residues 1–21 (MKASMFLALAGLVLLFVVGYA) form the signal peptide. The propeptide occupies 22–48 (SESEEKEFPRELLSKIFAVDDFKGEER). Disulfide bonds link C50/C65, C57/C70, and C64/C77. L81 bears the Leucine amide mark.

The protein belongs to the neurotoxin 10 (Hwtx-1) family. 15 (Hntx-3) subfamily. In terms of assembly, monomer. Expressed by the venom gland.

Its subcellular location is the secreted. Functionally, lethal neurotoxin. Selectively blocks tetrodotoxin-sensitive voltage-gated sodium channels (Nav). Does not affect tetrodotoxin-resistant voltage-gated sodium channels or calcium channels. This is Mu-theraphotoxin-Hhn2e from Cyriopagopus hainanus (Chinese bird spider).